The sequence spans 378 residues: D-alanine--D-alanine ligase (378 aa).

Residues 157–368 form the ATP-grasp domain; the sequence is KVVFESAGLS…YGDLIDELIH (212 aa). 189–244 is an ATP binding site; it reads VDKLGFPVFVKPARAGSSMGISKVDSMEGLDAAIDEARRHDLKLVIEAGIVGREIE. Positions 322, 335, and 337 each coordinate Mg(2+).

It belongs to the D-alanine--D-alanine ligase family. It depends on Mg(2+) as a cofactor. Requires Mn(2+) as cofactor.

Its subcellular location is the cytoplasm. It catalyses the reaction 2 D-alanine + ATP = D-alanyl-D-alanine + ADP + phosphate + H(+). The protein operates within cell wall biogenesis; peptidoglycan biosynthesis. Cell wall formation. This chain is D-alanine--D-alanine ligase, found in Paenarthrobacter aurescens (strain TC1).